The chain runs to 323 residues: Methenyltetrahydromethanopterin cyclohydrolase (323 aa).

Belongs to the MCH family.

The protein resides in the cytoplasm. The enzyme catalyses 5,10-methenyl-5,6,7,8-tetrahydromethanopterin + H2O = N(5)-formyl-5,6,7,8-tetrahydromethanopterin + H(+). It participates in one-carbon metabolism; methanogenesis from CO(2); 5,10-methenyl-5,6,7,8-tetrahydromethanopterin from CO(2): step 3/3. Its function is as follows. Catalyzes the reversible interconversion of 5-formyl-H(4)MPT to methenyl-H(4)MPT(+). The protein is Methenyltetrahydromethanopterin cyclohydrolase of Methanobrevibacter smithii (strain ATCC 35061 / DSM 861 / OCM 144 / PS).